The chain runs to 404 residues: uncharacterized protein (404 aa).

[4Fe-4S] cluster is bound by residues Cys-69, Cys-75, Cys-78, and Cys-166. Positions 226, 253, 274, and 334 each coordinate S-adenosyl-L-methionine. The active-site Nucleophile is the Cys-361.

It belongs to the class I-like SAM-binding methyltransferase superfamily. RNA M5U methyltransferase family.

This is an uncharacterized protein from Treponema denticola (strain ATCC 35405 / DSM 14222 / CIP 103919 / JCM 8153 / KCTC 15104).